The following is a 225-amino-acid chain: Uracil-DNA glycosylase 1 (225 aa).

Catalysis depends on Asp68, which acts as the Proton acceptor.

Belongs to the uracil-DNA glycosylase (UDG) superfamily. UNG family.

The protein localises to the cytoplasm. It carries out the reaction Hydrolyzes single-stranded DNA or mismatched double-stranded DNA and polynucleotides, releasing free uracil.. Functionally, excises uracil residues from the DNA which can arise as a result of misincorporation of dUMP residues by DNA polymerase or due to deamination of cytosine. The polypeptide is Uracil-DNA glycosylase 1 (ung1) (Streptomyces coelicolor (strain ATCC BAA-471 / A3(2) / M145)).